We begin with the raw amino-acid sequence, 366 residues long: Histidinol-phosphate aminotransferase (366 aa).

An N6-(pyridoxal phosphate)lysine modification is found at Lys-227.

It belongs to the class-II pyridoxal-phosphate-dependent aminotransferase family. Histidinol-phosphate aminotransferase subfamily. As to quaternary structure, homodimer. Pyridoxal 5'-phosphate serves as cofactor.

It catalyses the reaction L-histidinol phosphate + 2-oxoglutarate = 3-(imidazol-4-yl)-2-oxopropyl phosphate + L-glutamate. The protein operates within amino-acid biosynthesis; L-histidine biosynthesis; L-histidine from 5-phospho-alpha-D-ribose 1-diphosphate: step 7/9. The polypeptide is Histidinol-phosphate aminotransferase (Campylobacter hominis (strain ATCC BAA-381 / DSM 21671 / CCUG 45161 / LMG 19568 / NCTC 13146 / CH001A)).